Here is a 227-residue protein sequence, read N- to C-terminus: Cytochrome c oxidase subunit 2 (227 aa).

The Mitochondrial intermembrane portion of the chain corresponds to Met1–Ser14. The helical transmembrane segment at Pro15–Thr45 threads the bilayer. At Leu46 to Gln59 the chain is on the mitochondrial matrix side. A helical membrane pass occupies residues Glu60–Thr87. Topologically, residues Asp88–Leu227 are mitochondrial intermembrane. The Cu cation site is built by His161, Cys196, Glu198, Cys200, His204, and Met207. A Mg(2+)-binding site is contributed by Glu198.

The protein belongs to the cytochrome c oxidase subunit 2 family. In terms of assembly, component of the cytochrome c oxidase (complex IV, CIV), a multisubunit enzyme composed of 14 subunits. The complex is composed of a catalytic core of 3 subunits MT-CO1, MT-CO2 and MT-CO3, encoded in the mitochondrial DNA, and 11 supernumerary subunits COX4I, COX5A, COX5B, COX6A, COX6B, COX6C, COX7A, COX7B, COX7C, COX8 and NDUFA4, which are encoded in the nuclear genome. The complex exists as a monomer or a dimer and forms supercomplexes (SCs) in the inner mitochondrial membrane with NADH-ubiquinone oxidoreductase (complex I, CI) and ubiquinol-cytochrome c oxidoreductase (cytochrome b-c1 complex, complex III, CIII), resulting in different assemblies (supercomplex SCI(1)III(2)IV(1) and megacomplex MCI(2)III(2)IV(2)). Found in a complex with TMEM177, COA6, COX18, COX20, SCO1 and SCO2. Interacts with TMEM177 in a COX20-dependent manner. Interacts with COX20. Interacts with COX16. Cu cation is required as a cofactor.

The protein resides in the mitochondrion inner membrane. It carries out the reaction 4 Fe(II)-[cytochrome c] + O2 + 8 H(+)(in) = 4 Fe(III)-[cytochrome c] + 2 H2O + 4 H(+)(out). Its function is as follows. Component of the cytochrome c oxidase, the last enzyme in the mitochondrial electron transport chain which drives oxidative phosphorylation. The respiratory chain contains 3 multisubunit complexes succinate dehydrogenase (complex II, CII), ubiquinol-cytochrome c oxidoreductase (cytochrome b-c1 complex, complex III, CIII) and cytochrome c oxidase (complex IV, CIV), that cooperate to transfer electrons derived from NADH and succinate to molecular oxygen, creating an electrochemical gradient over the inner membrane that drives transmembrane transport and the ATP synthase. Cytochrome c oxidase is the component of the respiratory chain that catalyzes the reduction of oxygen to water. Electrons originating from reduced cytochrome c in the intermembrane space (IMS) are transferred via the dinuclear copper A center (CU(A)) of subunit 2 and heme A of subunit 1 to the active site in subunit 1, a binuclear center (BNC) formed by heme A3 and copper B (CU(B)). The BNC reduces molecular oxygen to 2 water molecules using 4 electrons from cytochrome c in the IMS and 4 protons from the mitochondrial matrix. This chain is Cytochrome c oxidase subunit 2 (MT-CO2), found in Gorilla gorilla beringei (Mountain gorilla).